A 134-amino-acid chain; its full sequence is Large ribosomal subunit protein bL20 (134 aa).

This sequence belongs to the bacterial ribosomal protein bL20 family.

Functionally, binds directly to 23S ribosomal RNA and is necessary for the in vitro assembly process of the 50S ribosomal subunit. It is not involved in the protein synthesizing functions of that subunit. The protein is Large ribosomal subunit protein bL20 of Brucella abortus (strain S19).